The following is a 226-amino-acid chain: Sugar fermentation stimulation protein homolog (226 aa).

The protein belongs to the SfsA family.

This chain is Sugar fermentation stimulation protein homolog, found in Picrophilus torridus (strain ATCC 700027 / DSM 9790 / JCM 10055 / NBRC 100828 / KAW 2/3).